The sequence spans 554 residues: Rab GTPase-binding effector protein 2 (554 aa).

Disordered stretches follow at residues 1 to 28 (MAAA…SELS), 167 to 208 (IQRR…GPAA), and 371 to 395 (GLRA…DEAL). Basic and acidic residues predominate over residues 14 to 28 (PQEKQKDASESSELS). Positions 15–173 (QEKQKDASES…IQEIQRRPRQ (159 aa)) form a coiled coil. Residues S176, S180, S187, and S191 each carry the phosphoserine modification. The stretch at 274–509 (DSQWEQLQVE…QAELETSEQV (236 aa)) forms a coiled coil.

It belongs to the rabaptin family. Heterodimer with RABGEF1. The dimer binds RAB5A that has been activated by GTP-binding. Interacts with SDCCAG8; this interaction is important for ciliogenesis regulation. Interacts with RAB4A; this interaction may mediate VEGFR2 cell surface expression.

Its subcellular location is the cytoplasm. The protein localises to the early endosome. It localises to the cytoskeleton. The protein resides in the microtubule organizing center. It is found in the centrosome. Its subcellular location is the cilium basal body. Plays a role in membrane trafficking and in homotypic early endosome fusion. Participates in arteriogenesis by regulating vascular endothelial growth factor receptor 2/VEGFR2 cell surface expression and endosomal trafficking. By interacting with SDCCAG8, localizes to centrosomes and plays a critical role in ciliogenesis. The chain is Rab GTPase-binding effector protein 2 (Rabep2) from Mus musculus (Mouse).